The primary structure comprises 411 residues: Mitogen-activated protein kinase 8 (411 aa).

Positions 26–321 constitute a Protein kinase domain; the sequence is YQNLKPIGSG…VDEALQHPYI (296 aa). ATP contacts are provided by residues 32–40 and lysine 55; that span reads IGSGAQGIV. An S-nitrosocysteine; in inhibited form modification is found at cysteine 116. Aspartate 151 (proton acceptor) is an active-site residue. Threonine 183 carries the post-translational modification Phosphothreonine; by MAP2K7. A TXY motif is present at residues 183 to 185; that stretch reads TPY. At tyrosine 185 the chain carries Phosphotyrosine; by MAP2K4. A disordered region spans residues 368–411; that stretch reads KNGVIRGQPSPLGAAVINGSQHPVSSPSVNDMSSMSTDPTLASD. Serine 377 carries the post-translational modification Phosphoserine. Low complexity predominate over residues 390 to 403; the sequence is PVSSPSVNDMSSMS.

Belongs to the protein kinase superfamily. CMGC Ser/Thr protein kinase family. MAP kinase subfamily. Forms a complex with MAPK8IP1 and ARHGEF28. Found in a complex with SH3RF1, RAC1, MAP3K11/MLK3, MAP2K7/MKK7 and MAPK8IP1/JIP1. Found in a complex with SH3RF1, RAC2, MAP3K7/TAK1, MAP2K7/MKK7, MAPK8IP1/JIP1 and MAPK9/JNK2. Binds to at least four scaffolding proteins, MAPK8IP1/JIP-1, MAPK8IP2/JIP-2, MAPK8IP3/JIP-3/JSAP1 and SPAG9/MAPK8IP4/JIP-4. These proteins also bind other components of the JNK signaling pathway. Interacts with TP53, WWOX. Interacts with JAMP. Interacts with NFATC4. Interacts (phosphorylated form) with NFE2; the interaction phosphorylates NFE2 in undifferentiated cells. Interacts with MECOM; regulates JNK signaling. Interacts with PIN1; this interaction mediates MAPK8 conformational changes leading to the binding of MAPK8 to its substrates. Interacts with HSF1 (via D domain and preferentially with hyperphosphorylated form); this interaction occurs under both normal growth conditions and immediately upon heat shock. Interacts with STMN2, STMN3 and STMN4. Interacts with GRIPAP1. Interacts with POU5F1; phosphorylates POU5F1 at 'Ser-347'. Interacts with HSF4. Requires Mg(2+) as cofactor. Post-translationally, dually phosphorylated on Thr-183 and Tyr-185 by MAP2K7 and MAP2K4, which activates the enzyme. Phosphorylated by TAOK2. Phosphorylated form is more concentrated at synapses than none-phosphorylated. Nitrosylated upon IFN-gamma-induced endogenous NO production, which inhibits the enzyme. May be phosphorylated at Thr-183 and Tyr-185 by MAP3K1/MEKK1.

Its subcellular location is the cytoplasm. It is found in the nucleus. The protein resides in the synapse. It carries out the reaction L-seryl-[protein] + ATP = O-phospho-L-seryl-[protein] + ADP + H(+). The enzyme catalyses L-threonyl-[protein] + ATP = O-phospho-L-threonyl-[protein] + ADP + H(+). Activated by threonine and tyrosine phosphorylation by either of two dual specificity kinases, MAP2K4 and MAP2K7. MAP2K4 shows a strong preference for Tyr-185 while MAP2K7 phosphorylates Tyr-183 preferentially. Inhibited by dual specificity phosphatases, such as DUSP1. Inhibited by SERPINB3. Inhibited by IFN-gamma-induced S-nitrosylation. Its function is as follows. Serine/threonine-protein kinase involved in various processes such as cell proliferation, differentiation, migration, transformation and programmed cell death. Extracellular stimuli such as pro-inflammatory cytokines or physical stress stimulate the stress-activated protein kinase/c-Jun N-terminal kinase (SAP/JNK) signaling pathway. In this cascade, two dual specificity kinases MAP2K4/MKK4 and MAP2K7/MKK7 phosphorylate and activate MAPK8/JNK1. In turn, MAPK8/JNK1 phosphorylates a number of transcription factors, primarily components of AP-1 such as JUN, JDP2 and ATF2 and thus regulates AP-1 transcriptional activity. Phosphorylates the replication licensing factor CDT1, inhibiting the interaction between CDT1 and the histone H4 acetylase HBO1 to replication origins. Loss of this interaction abrogates the acetylation required for replication initiation. Promotes stressed cell apoptosis by phosphorylating key regulatory factors including p53/TP53 and Yes-associates protein YAP1. In T-cells, MAPK8 and MAPK9 are required for polarized differentiation of T-helper cells into Th1 cells. Contributes to the survival of erythroid cells by phosphorylating the antagonist of cell death BAD upon EPO stimulation. Mediates starvation-induced BCL2 phosphorylation, BCL2 dissociation from BECN1, and thus activation of autophagy. Phosphorylates STMN2 and hence regulates microtubule dynamics, controlling neurite elongation in cortical neurons. In the developing brain, through its cytoplasmic activity on STMN2, negatively regulates the rate of exit from multipolar stage and of radial migration from the ventricular zone. Phosphorylates several other substrates including heat shock factor protein 4 (HSF4), the deacetylase SIRT1, ELK1, or the E3 ligase ITCH. Phosphorylates the CLOCK-BMAL1 heterodimer and plays a role in the regulation of the circadian clock. Phosphorylates the heat shock transcription factor HSF1, suppressing HSF1-induced transcriptional activity. Phosphorylates POU5F1, which results in the inhibition of POU5F1's transcriptional activity and enhances its proteasomal degradation. Phosphorylates JUND and this phosphorylation is inhibited in the presence of MEN1. In neurons, phosphorylates SYT4 which captures neuronal dense core vesicles at synapses. Phosphorylates EIF4ENIF1/4-ET in response to oxidative stress, promoting P-body assembly. Phosphorylates SIRT6 in response to oxidative stress, stimulating its mono-ADP-ribosyltransferase activity. Phosphorylates NLRP3, promoting assembly of the NLRP3 inflammasome. Phosphorylates ALKBH5 in response to reactive oxygen species (ROS), promoting ALKBH5 sumoylation and inactivation. This is Mitogen-activated protein kinase 8 (Mapk8) from Rattus norvegicus (Rat).